The chain runs to 137 residues: ATP synthase epsilon chain 1 (137 aa).

This sequence belongs to the ATPase epsilon chain family. F-type ATPases have 2 components, CF(1) - the catalytic core - and CF(0) - the membrane proton channel. CF(1) has five subunits: alpha(3), beta(3), gamma(1), delta(1), epsilon(1). CF(0) has three main subunits: a, b and c.

It localises to the cell inner membrane. Its function is as follows. Produces ATP from ADP in the presence of a proton gradient across the membrane. The polypeptide is ATP synthase epsilon chain 1 (atpC1) (Ralstonia nicotianae (strain ATCC BAA-1114 / GMI1000) (Ralstonia solanacearum)).